Reading from the N-terminus, the 249-residue chain is Ubiquinone biosynthesis O-methyltransferase (249 aa).

S-adenosyl-L-methionine is bound by residues Arg41, Gly72, Asp93, and Met136.

This sequence belongs to the methyltransferase superfamily. UbiG/COQ3 family.

It carries out the reaction a 3-demethylubiquinol + S-adenosyl-L-methionine = a ubiquinol + S-adenosyl-L-homocysteine + H(+). The catalysed reaction is a 3-(all-trans-polyprenyl)benzene-1,2-diol + S-adenosyl-L-methionine = a 2-methoxy-6-(all-trans-polyprenyl)phenol + S-adenosyl-L-homocysteine + H(+). It participates in cofactor biosynthesis; ubiquinone biosynthesis. In terms of biological role, O-methyltransferase that catalyzes the 2 O-methylation steps in the ubiquinone biosynthetic pathway. This Methylobacterium nodulans (strain LMG 21967 / CNCM I-2342 / ORS 2060) protein is Ubiquinone biosynthesis O-methyltransferase.